A 99-amino-acid chain; its full sequence is Small ribosomal subunit protein bS18 (99 aa).

Residues 1–25 (MAEDHPSVDLDTHLSSPRESEESAP) show a composition bias toward basic and acidic residues. Residues 1–28 (MAEDHPSVDLDTHLSSPRESEESAPKKN) are disordered.

The protein belongs to the bacterial ribosomal protein bS18 family. As to quaternary structure, part of the 30S ribosomal subunit. Forms a tight heterodimer with protein bS6.

Functionally, binds as a heterodimer with protein bS6 to the central domain of the 16S rRNA, where it helps stabilize the platform of the 30S subunit. The protein is Small ribosomal subunit protein bS18 of Treponema pallidum (strain Nichols).